The chain runs to 61 residues: UPF0434 protein PSPPH_1629 (61 aa).

It belongs to the UPF0434 family.

The chain is UPF0434 protein PSPPH_1629 from Pseudomonas savastanoi pv. phaseolicola (strain 1448A / Race 6) (Pseudomonas syringae pv. phaseolicola (strain 1448A / Race 6)).